We begin with the raw amino-acid sequence, 130 residues long: MSGRGKQGGKTRAKAKTRSSRAGLQFPVGRVHRLLRKGNYAERVGAGAPVYLAAVLEYLTAEILELAGNAARDNKKTRIIPRHLQLAVRNDEELNKLLGGVTIAQGGVLPNIQSVLLPKKTESAKSAKSK.

A disordered region spans residues 1 to 22 (MSGRGKQGGKTRAKAKTRSSRA). S2 bears the N-acetylserine mark. A Phosphoserine modification is found at S2. K6 is modified (N6-(2-hydroxyisobutyryl)lysine). K6 carries the post-translational modification N6-acetyllysine. Positions 7 to 19 (QGGKTRAKAKTRS) are enriched in basic residues. The residue at position 10 (K10) is an N6-(2-hydroxyisobutyryl)lysine; alternate. The residue at position 10 (K10) is an N6-lactoyllysine; alternate. K10 carries the post-translational modification N6-succinyllysine. Residues K14 and K16 each participate in a glycyl lysine isopeptide (Lys-Gly) (interchain with G-Cter in ubiquitin) cross-link. K37 bears the N6-(2-hydroxyisobutyryl)lysine; alternate mark. Residues K75 and K76 each carry the N6-(2-hydroxyisobutyryl)lysine modification. Residue K96 is modified to N6-(2-hydroxyisobutyryl)lysine; alternate. K96 bears the N6-succinyllysine mark. The residue at position 96 (K96) is an N6-glutaryllysine; alternate. Q105 carries the post-translational modification N5-methylglutamine. K119 bears the N6-(2-hydroxyisobutyryl)lysine; alternate mark. N6-glutaryllysine; alternate is present on K119. Residue K120 forms a Glycyl lysine isopeptide (Lys-Gly) (interchain with G-Cter in ubiquitin) linkage.

It belongs to the histone H2A family. As to quaternary structure, the nucleosome is a histone octamer containing two molecules each of H2A, H2B, H3 and H4 assembled in one H3-H4 heterotetramer and two H2A-H2B heterodimers. The octamer wraps approximately 147 bp of DNA. Monoubiquitination of Lys-120 (H2AK119Ub) gives a specific tag for epigenetic transcriptional repression. Following DNA double-strand breaks (DSBs), it is ubiquitinated through 'Lys-63' linkage of ubiquitin moieties, leading to the recruitment of repair proteins to sites of DNA damage. H2AK119Ub and ionizing radiation-induced 'Lys-63'-linked ubiquitination are distinct events. Post-translationally, phosphorylation on Ser-2 is enhanced during mitosis. Phosphorylation on Ser-2 directly represses transcription. In terms of processing, glutamine methylation at Gln-105 (H2AQ104me) by FBL is specifically dedicated to polymerase I. It is present at 35S ribosomal DNA locus and impairs binding of the FACT complex.

It is found in the nucleus. The protein resides in the chromosome. Functionally, core component of nucleosome. Nucleosomes wrap and compact DNA into chromatin, limiting DNA accessibility to the cellular machineries which require DNA as a template. Histones thereby play a central role in transcription regulation, DNA repair, DNA replication and chromosomal stability. DNA accessibility is regulated via a complex set of post-translational modifications of histones, also called histone code, and nucleosome remodeling. In Xenopus laevis (African clawed frog), this protein is Histone H2A type 1.